The following is a 263-amino-acid chain: Endonuclease 8 (263 aa).

P2 functions as the Schiff-base intermediate with DNA in the catalytic mechanism. Residue E3 is the Proton donor of the active site. K53 (proton donor; for beta-elimination activity) is an active-site residue. DNA contacts are provided by Q70, R125, and N169. Residues 229-263 form an FPG-type zinc finger; sequence KVFHRDGEPCERCGSIIEKTTLSSRPFYWCPGCQH. R253 serves as the catalytic Proton donor; for delta-elimination activity.

Belongs to the FPG family. The cofactor is Zn(2+).

The catalysed reaction is 2'-deoxyribonucleotide-(2'-deoxyribose 5'-phosphate)-2'-deoxyribonucleotide-DNA = a 3'-end 2'-deoxyribonucleotide-(2,3-dehydro-2,3-deoxyribose 5'-phosphate)-DNA + a 5'-end 5'-phospho-2'-deoxyribonucleoside-DNA + H(+). Involved in base excision repair of DNA damaged by oxidation or by mutagenic agents. Acts as a DNA glycosylase that recognizes and removes damaged bases. Has a preference for oxidized pyrimidines, such as thymine glycol, 5,6-dihydrouracil and 5,6-dihydrothymine. Has AP (apurinic/apyrimidinic) lyase activity and introduces nicks in the DNA strand. Cleaves the DNA backbone by beta-delta elimination to generate a single-strand break at the site of the removed base with both 3'- and 5'-phosphates. The protein is Endonuclease 8 of Escherichia coli O9:H4 (strain HS).